Reading from the N-terminus, the 177-residue chain is Bifunctional protein PyrR (177 aa).

The short motif at Val99–Thr111 is the PRPP-binding element.

The protein belongs to the purine/pyrimidine phosphoribosyltransferase family. PyrR subfamily.

It catalyses the reaction UMP + diphosphate = 5-phospho-alpha-D-ribose 1-diphosphate + uracil. Regulates the transcription of the pyrimidine nucleotide (pyr) operon in response to exogenous pyrimidines. Its function is as follows. Also displays a weak uracil phosphoribosyltransferase activity which is not physiologically significant. In Microcystis aeruginosa (strain NIES-843 / IAM M-2473), this protein is Bifunctional protein PyrR.